The sequence spans 387 residues: MHPCSSVLHLLLRCMRGCCRHTRSRVPRRLRRHVSYIRLIFKSLYFNSLTNSDVVTDSILEPVFWMVEVVTRWFGMVFVFLVVALTSSVVFIAYFCLLPLVLHTYSPGWMIWHICYGHWNLVMIVFHYYKATKTPPGYPPKMKTDVPFVSVCKKCIIPKPARSHHCGICKTCILKMDHHCPWLNNCVGHFNHRYFFSFCLFLTLGCMYCSVSGRHLFIDAYNTIDQLKHLEAEKQGVPVTGIGLLIGIVPSAGVAGKAVQVAQEVSQPPYTYKDRMFHKSVIYMWVLTSTVSVALGALTLWHALLITRGETSIERHINGKEAKRLAKRGRVYRNPFSYGKLNNWKVFFGVEKRSHWLTRVLLPSGHAPYGDGLTWDIYPLKKDMMPV.

A run of 2 helical transmembrane segments spans residues tryptophan 73–alanine 93 and serine 106–phenylalanine 126. Residues serine 150 to leucine 200 form the DHHC domain. Residue cysteine 180 is the S-palmitoyl cysteine intermediate of the active site. 3 helical membrane passes run phenylalanine 198–isoleucine 218, glycine 236–glycine 256, and valine 281–tryptophan 301.

The protein belongs to the DHHC palmitoyltransferase family. Expressed in the central nervous system (CNS). Expressed in the developing forebrain, and especially in the telencephalon.

The protein localises to the endoplasmic reticulum membrane. It carries out the reaction L-cysteinyl-[protein] + hexadecanoyl-CoA = S-hexadecanoyl-L-cysteinyl-[protein] + CoA. Palmitoyl acyltransferase that mediates palmitoylation of proteins and is required during embryonic heart development. Involved in the proliferation of neural stem cells by regulating the FGF/ERK pathway. Involved in the proliferation of neural stem cells by regulating the FGF/ERK pathway. The chain is Palmitoyltransferase ZDHHC16A from Danio rerio (Zebrafish).